A 627-amino-acid chain; its full sequence is BURP domain-containing protein 12 (627 aa).

The first 25 residues, 1 to 25 (MASPPHLPLLLLLLVVVCNAAGGDG), serve as a signal peptide directing secretion. N-linked (GlcNAc...) asparagine glycosylation is found at asparagine 119, asparagine 175, asparagine 251, asparagine 366, asparagine 384, and asparagine 530. A BURP domain is found at 415 to 626 (FFRETELVSG…FEGDMTWTVA (212 aa)).

Expressed in stems, leaves, shoot and panicles.

In Oryza sativa subsp. japonica (Rice), this protein is BURP domain-containing protein 12 (BURP12).